The sequence spans 630 residues: Sodium-dependent serotonin transporter (630 aa).

Polar residues-rich tracts occupy residues 1-11 and 42-55; these read METTPLNSQKV and QISN…STSA. The tract at residues 1 to 63 is disordered; it reads METTPLNSQK…SAGDEAPHST (63 aa). Over 1 to 87 the chain is Cytoplasmic; the sequence is METTPLNSQK…ERETWGKKMD (87 aa). The residue at position 47 (Tyr47) is a Phosphotyrosine. The chain crosses the membrane as a helical span at residues 88–112; it reads FLLSVIGYAVDLGNIWRFPYICYQN. Gly94, Ala96, Val97, Asp98, and Asn101 together coordinate Na(+). Asp98 lines the serotonin pocket. Over 113-115 the chain is Extracellular; the sequence is GGG. Residues 116-135 form a helical membrane-spanning segment; it reads AFLLPYTIMAIFGGIPLFYM. The Cytoplasmic portion of the chain corresponds to 136–160; the sequence is ELALGQYHRNGCISIWKKICPIFKG. Residue Tyr142 is modified to Phosphotyrosine. Residues 161-186 form a helical membrane-spanning segment; that stretch reads IGYAICIIAFYIASYYNTIIAWALYY. Over 187-252 the chain is Extracellular; sequence LISSFTDQLP…KGLQDLGTIS (66 aa). The cysteines at positions 200 and 209 are disulfide-linked. Asn208 and Asn217 each carry an N-linked (GlcNAc...) asparagine glycan. Residues 253 to 271 form a helical membrane-spanning segment; sequence WQLALCIMLIFTIIYFSIW. Residues 272–277 lie on the Cytoplasmic side of the membrane; sequence KGVKTS. Thr276 carries the post-translational modification Phosphothreonine. Residues 278–297 traverse the membrane as a helical segment; that stretch reads GKVVWVTATFPYIVLSVLLV. Topologically, residues 298-324 are extracellular; it reads RGATLPGAWRGVVFYLKPNWQKLLETG. The helical transmembrane segment at 325-347 threads the bilayer; the sequence is VWVDAAAQIFFSLGPGFGVLLAF. Ser336 contacts Na(+). The Cytoplasmic segment spans residues 348–360; the sequence is ASYNKFNNNCYQD. A helical transmembrane segment spans residues 361–380; the sequence is ALVTSVVNCMTSFVSGFVIF. Asn368 contributes to the Na(+) binding site. Residues 381 to 421 lie on the Extracellular side of the membrane; that stretch reads TVLGYMAEMRNEDVSEVAKDAGPSLLFITYAEAIANMPAST. Residues 422–443 form a helical membrane-spanning segment; the sequence is FFAIIFFLMLITLGLDSTFAGL. 3 residues coordinate Na(+): Leu434, Asp437, and Ser438. Serotonin is bound at residue Thr439. Residues 444 to 463 lie on the Cytoplasmic side of the membrane; sequence EGVITAVLDEFPHIWAKRRE. The chain crosses the membrane as a helical span at residues 464–483; sequence WFVLIVVITCILGSLLTLTS. The Extracellular portion of the chain corresponds to 484–494; the sequence is GGAYVVTLLEE. Residues Glu494 and Tyr495 each coordinate serotonin. Residues 495–516 form a helical membrane-spanning segment; it reads YATGPAVLTVALIEAVVVSWFY. Residues 517–538 lie on the Cytoplasmic side of the membrane; that stretch reads GITQFCSDVKEMLGFSPGWFWR. A helical membrane pass occupies residues 539 to 558; it reads ICWVAISPLFLLFIICSFLM. Serotonin contacts are provided by Phe556 and Ser559. Residues 559 to 574 lie on the Extracellular side of the membrane; the sequence is SPPQLRLFQYNYPHWS. A helical membrane pass occupies residues 575–595; the sequence is IILGYCIGTSSVICIPIYIIY. Residues 596–630 lie on the Cytoplasmic side of the membrane; sequence RLISTPGTLKERIIKSITPETPTEIPCGDIRMNAV. The segment at 616–624 is interaction with RAB4A; the sequence is TPTEIPCGD.

This sequence belongs to the sodium:neurotransmitter symporter (SNF) (TC 2.A.22) family. SLC6A4 subfamily. In terms of assembly, monomer or homooligomer. Interacts (via C-terminus) with SCAMP2; the interaction is direct and retains transporter molecules intracellularly. Interacts with filamentous actin and STX1A. Interacts (via the N-terminus) with STX1A (via the H3 domain); this interaction regulates SLC4A6 channel conductance. Interacts with SEC23A, SEC24C and PATJ. Interacts with NOS1; the interaction may diminish the cell surface localization of SERT in the brain and, correspondingly, reduce serotonin reuptake. Interacts with TGFB1I1. Interacts with ITGAV:ITGB3. Interacts (via C-terminus) with ITGB3; this interaction regulates SLC6A4 trafficking. Post-translationally, phosphorylation at Thr-276 increases 5-HT uptake and is required for cGMP-mediated SERT regulation. Expressed in the lung, midbrain and brainstem regions. Expressed in brainstem raphe neurons.

The protein resides in the cell membrane. It is found in the endomembrane system. The protein localises to the endosome membrane. It localises to the synapse. Its subcellular location is the cell junction. The protein resides in the focal adhesion. It is found in the cell projection. The protein localises to the neuron projection. The catalysed reaction is serotonin(out) + K(+)(in) + Na(+)(out) + H(+)(in) = serotonin(in) + K(+)(out) + Na(+)(in) + H(+)(out). Serotonin transporter that cotransports serotonin with one Na(+) ion in exchange for one K(+) ion and possibly one proton in an overall electroneutral transport cycle. Transports serotonin across the plasma membrane from the extracellular compartment to the cytosol thus limiting serotonin intercellular signaling. Essential for serotonin homeostasis in the central nervous system. In the developing somatosensory cortex, acts in glutamatergic neurons to control serotonin uptake and its trophic functions accounting for proper spatial organization of cortical neurons and elaboration of sensory circuits. In the mature cortex, acts primarily in brainstem raphe neurons to mediate serotonin uptake from the synaptic cleft back into the pre-synaptic terminal thus terminating serotonin signaling at the synapse. Modulates mucosal serotonin levels in the gastrointestinal tract through uptake and clearance of serotonin in enterocytes. Required for enteric neurogenesis and gastrointestinal reflexes. Regulates blood serotonin levels by ensuring rapid high affinity uptake of serotonin from plasma to platelets, where it is further stored in dense granules via vesicular monoamine transporters and then released upon stimulation. Mechanistically, the transport cycle starts with an outward-open conformation having Na1(+) and Cl(-) sites occupied. The binding of a second extracellular Na2(+) ion and serotonin substrate leads to structural changes to outward-occluded to inward-occluded to inward-open, where the Na2(+) ion and serotonin are released into the cytosol. Binding of intracellular K(+) ion induces conformational transitions to inward-occluded to outward-open and completes the cycle by releasing K(+) possibly together with a proton bound to Asp-98 into the extracellular compartment. Na1(+) and Cl(-) ions remain bound throughout the transport cycle. Additionally, displays serotonin-induced channel-like conductance for monovalent cations, mainly Na(+) ions. The channel activity is uncoupled from the transport cycle and may contribute to the membrane resting potential or excitability. This Mus musculus (Mouse) protein is Sodium-dependent serotonin transporter.